A 201-amino-acid chain; its full sequence is 3-isopropylmalate dehydratase small subunit (201 aa).

Belongs to the LeuD family. LeuD type 1 subfamily. As to quaternary structure, heterodimer of LeuC and LeuD.

The catalysed reaction is (2R,3S)-3-isopropylmalate = (2S)-2-isopropylmalate. The protein operates within amino-acid biosynthesis; L-leucine biosynthesis; L-leucine from 3-methyl-2-oxobutanoate: step 2/4. In terms of biological role, catalyzes the isomerization between 2-isopropylmalate and 3-isopropylmalate, via the formation of 2-isopropylmaleate. In Sinorhizobium medicae (strain WSM419) (Ensifer medicae), this protein is 3-isopropylmalate dehydratase small subunit.